The sequence spans 252 residues: Aspartate/glutamate leucyltransferase (252 aa).

Belongs to the R-transferase family. Bpt subfamily.

The protein resides in the cytoplasm. The enzyme catalyses N-terminal L-glutamyl-[protein] + L-leucyl-tRNA(Leu) = N-terminal L-leucyl-L-glutamyl-[protein] + tRNA(Leu) + H(+). It catalyses the reaction N-terminal L-aspartyl-[protein] + L-leucyl-tRNA(Leu) = N-terminal L-leucyl-L-aspartyl-[protein] + tRNA(Leu) + H(+). In terms of biological role, functions in the N-end rule pathway of protein degradation where it conjugates Leu from its aminoacyl-tRNA to the N-termini of proteins containing an N-terminal aspartate or glutamate. The polypeptide is Aspartate/glutamate leucyltransferase (Polynucleobacter necessarius subsp. necessarius (strain STIR1)).